The sequence spans 113 residues: MHELGITQNIVAIVSEYAQGSKVNRILLEIGKLSAIMPDAVQFCFDICSKGTSLEGAVLEIREIPGLAKCRQCGAEIALEKPFGICGCGSVHLDVITGEELKIKEIEVEEVCV.

Histidine 2 lines the Ni(2+) pocket. Zn(2+)-binding residues include cysteine 70, cysteine 73, cysteine 86, and cysteine 88.

Belongs to the HypA/HybF family.

In terms of biological role, involved in the maturation of [NiFe] hydrogenases. Required for nickel insertion into the metal center of the hydrogenase. This Nostoc sp. (strain PCC 7120 / SAG 25.82 / UTEX 2576) protein is Hydrogenase maturation factor HypA.